The sequence spans 330 residues: MKPCMTALRQVIQPLSLNFQGNMVDVPFFRRKDKVVFVMGATGTGKSRLAIDLATRFPAEIVNSDKIQVYKGLDIVTNKVTPEESLGVPHHLLGTVHDTYEDFTAEDFQREAIRAVESIVQRDRVPIIAGGSNSYIEALVNDCVDFRLRYNCCFLWVDVSRPVLHSFVSERVDKMVDMGLVDEVRRIFDPSSSDYSAGIRRAIGVPELDEFLRSEMRNYPAETTERLLETAIEKIKENTCLLACRQLQKIQRLYKQWKWNMHRVDATEVFLRRGEEADEAWDNSVAHPSALAVEKFLSYSDDHHLEGANILLPEISAVPPLPAAVAAISR.

A chloroplast-targeting transit peptide spans 1 to 39; that stretch reads MKPCMTALRQVIQPLSLNFQGNMVDVPFFRRKDKVVFVM. 40-47 provides a ligand contact to ATP; the sequence is GATGTGKS.

Belongs to the IPP transferase family. As to expression, expressed in root primordia, columella root caps, upper part of young inflorescences, and fruit abscission zones.

It localises to the plastid. The protein localises to the chloroplast. The catalysed reaction is dimethylallyl diphosphate + ADP = N(6)-(dimethylallyl)adenosine 5'-diphosphate + diphosphate. It catalyses the reaction dimethylallyl diphosphate + ATP = N(6)-(dimethylallyl)adenosine 5'-triphosphate + diphosphate. In terms of biological role, involved in cytokinin biosynthesis. Catalyzes the transfer of an isopentenyl group from dimethylallyl diphosphate (DMAPP) to ATP and ADP. This Arabidopsis thaliana (Mouse-ear cress) protein is Adenylate isopentenyltransferase 5, chloroplastic (IPT5).